The chain runs to 489 residues: Bifunctional protein HldE (489 aa).

The segment at M1–A330 is ribokinase. N205 to E208 serves as a coordination point for ATP. D275 is an active-site residue. A cytidylyltransferase region spans residues F358–A489.

The protein in the N-terminal section; belongs to the carbohydrate kinase PfkB family. It in the C-terminal section; belongs to the cytidylyltransferase family. In terms of assembly, homodimer.

The enzyme catalyses D-glycero-beta-D-manno-heptose 7-phosphate + ATP = D-glycero-beta-D-manno-heptose 1,7-bisphosphate + ADP + H(+). The catalysed reaction is D-glycero-beta-D-manno-heptose 1-phosphate + ATP + H(+) = ADP-D-glycero-beta-D-manno-heptose + diphosphate. The protein operates within nucleotide-sugar biosynthesis; ADP-L-glycero-beta-D-manno-heptose biosynthesis; ADP-L-glycero-beta-D-manno-heptose from D-glycero-beta-D-manno-heptose 7-phosphate: step 1/4. It functions in the pathway nucleotide-sugar biosynthesis; ADP-L-glycero-beta-D-manno-heptose biosynthesis; ADP-L-glycero-beta-D-manno-heptose from D-glycero-beta-D-manno-heptose 7-phosphate: step 3/4. Catalyzes the phosphorylation of D-glycero-D-manno-heptose 7-phosphate at the C-1 position to selectively form D-glycero-beta-D-manno-heptose-1,7-bisphosphate. Functionally, catalyzes the ADP transfer from ATP to D-glycero-beta-D-manno-heptose 1-phosphate, yielding ADP-D-glycero-beta-D-manno-heptose. The sequence is that of Bifunctional protein HldE from Nitrobacter hamburgensis (strain DSM 10229 / NCIMB 13809 / X14).